The chain runs to 291 residues: Methionine aminopeptidase (291 aa).

H118 contacts substrate. The a divalent metal cation site is built by D135, D146, and H209. H216 is a substrate binding site. Residues E241 and E273 each coordinate a divalent metal cation.

Belongs to the peptidase M24A family. Methionine aminopeptidase type 1 subfamily. Monomer. Requires Co(2+) as cofactor. The cofactor is Zn(2+). Mn(2+) serves as cofactor. Fe(2+) is required as a cofactor.

The catalysed reaction is Release of N-terminal amino acids, preferentially methionine, from peptides and arylamides.. Removes the N-terminal methionine from nascent proteins. The N-terminal methionine is often cleaved when the second residue in the primary sequence is small and uncharged (Met-Ala-, Cys, Gly, Pro, Ser, Thr, or Val). Requires deformylation of the N(alpha)-formylated initiator methionine before it can be hydrolyzed. The chain is Methionine aminopeptidase from Chlamydia muridarum (strain MoPn / Nigg).